The following is a 389-amino-acid chain: 5-hydroxytryptamine receptor 1B (389 aa).

The segment at 1–27 (MEETNTHCAPPPPAGSQTGVSQANLSS) is disordered. Residues 1–45 (MEETNTHCAPPPPAGSQTGVSQANLSSAPPNCSTEGYIYQDSIAL) are Extracellular-facing. Residues 15–27 (GSQTGVSQANLSS) show a composition bias toward polar residues. 2 N-linked (GlcNAc...) asparagine glycosylation sites follow: asparagine 24 and asparagine 31. Residues 46 to 71 (PWKVLLILVLALFTLATTLSNAFVIA) traverse the membrane as a helical segment. At 72-85 (TVYRTRKLHTPANY) the chain is on the cytoplasmic side. A helical transmembrane segment spans residues 86–110 (LIASLAVTDLLVSILVMPISTMYTV). Over 111–118 (TGRWTLGQ) the chain is Extracellular. Residues 119-144 (VVCDFWLSSDITCCTASILHLCVIAL) traverse the membrane as a helical segment. A disulfide bridge links cysteine 121 with cysteine 198. The ergotamine site is built by aspartate 128 and threonine 133. A DRY motif; important for ligand-induced conformation changes and signaling motif is present at residues 145–147 (DRY). The Cytoplasmic portion of the chain corresponds to 145-164 (DRYWAITDAVEYSAKRTPKR). The helical transmembrane segment at 165–183 (AAVMIALVWVFSISISLPP) threads the bilayer. Topologically, residues 184 to 204 (FFWRQAKAEEEVSDCRVNTDH) are extracellular. Residue valine 200 coordinates ergotamine. The chain crosses the membrane as a helical span at residues 205 to 228 (MLYTVYSTVGAFYFPTLLLIALYG). Topologically, residues 229-314 (RIYVEARSRI…AARERKATKT (86 aa)) are cytoplasmic. Positions 258 to 271 (DSPGSTSSVTSVNS) are enriched in polar residues. The tract at residues 258–281 (DSPGSTSSVTSVNSRAPDVPSESG) is disordered. A helical membrane pass occupies residues 315-336 (LGIILGAFIVCWLPFFIISLVM). Residues 337 to 346 (PICKDACWFH) are Extracellular-facing. Residues 347–369 (LAIFDFFTWLGYLNSLINPIIYT) traverse the membrane as a helical segment. An NPxxY motif; important for ligand-induced conformation changes and signaling motif is present at residues 364-368 (NPIIY). Residues 370 to 389 (MSNEDFKQAFHKLIRFKCTG) lie on the Cytoplasmic side of the membrane. Cysteine 387 carries S-palmitoyl cysteine lipidation.

The protein belongs to the G-protein coupled receptor 1 family. Homodimer. Heterodimer with HTR1D. Post-translationally, phosphorylated. Desensitization of the receptor may be mediated by its phosphorylation. Palmitoylated.

It is found in the cell membrane. Functionally, G-protein coupled receptor for 5-hydroxytryptamine (serotonin). Also functions as a receptor for ergot alkaloid derivatives, various anxiolytic and antidepressant drugs and other psychoactive substances, such as lysergic acid diethylamide (LSD). Ligand binding causes a conformation change that triggers signaling via guanine nucleotide-binding proteins (G proteins) and modulates the activity of downstream effectors, such as adenylate cyclase. HTR1B is coupled to G(i)/G(o) G alpha proteins and mediates inhibitory neurotransmission by inhibiting adenylate cyclase activity. Arrestin family members inhibit signaling via G proteins and mediate activation of alternative signaling pathways. Regulates the release of 5-hydroxytryptamine, dopamine and acetylcholine in the brain, and thereby affects neural activity, nociceptive processing, pain perception, mood and behavior. Besides, plays a role in vasoconstriction of cerebral arteries. The protein is 5-hydroxytryptamine receptor 1B (HTR1B) of Felis catus (Cat).